The sequence spans 419 residues: MTSQKIVKRLGKTSIVPPHGSDELKPLLLEGEALSQALHNAKNLPKITLSSRERGDLIMLGIGGFTPLDGFMNQADWQGVVDEMTLKTGANKGLFWPIPITLSTSKEQADSLAPGDEVALVAEDGEIMGVITVEETYTIDKAHECQQVFTTTEEEHPGVKQVMEQGEVNVAGAVKVFSQGEFPTLYPEIYKTPAETRKLFEEKNWQTIAAFQTRNPMHRSHEYLAKIAIEICDGVMIHSLLGALKPGDIPAEVRQEAIKTLIDNYFKKDTVIQAGYPLDMRYAGPREALLHALFRQNYGCSHLIVGRDHAGVGDYYGPFDAQAIFDEIDKDAMLTQPLKIDWTFWCNACQAMASTKTCPHDAEHHVKVSGTKLRKALSEDQEVPENFSRPEVLQILRNYYESIAKEDRAEVKLVGASAQ.

This sequence belongs to the sulfate adenylyltransferase family.

It catalyses the reaction sulfate + ATP + H(+) = adenosine 5'-phosphosulfate + diphosphate. Its pathway is sulfur metabolism; hydrogen sulfide biosynthesis; sulfite from sulfate: step 1/3. The protein is Sulfate adenylyltransferase of Psychrobacter sp. (strain PRwf-1).